Here is a 312-residue protein sequence, read N- to C-terminus: Acetyl-coenzyme A carboxylase carboxyl transferase subunit alpha (312 aa).

Positions Arg36–Thr286 constitute a CoA carboxyltransferase C-terminal domain.

It belongs to the AccA family. In terms of assembly, acetyl-CoA carboxylase is a heterohexamer composed of biotin carboxyl carrier protein (AccB), biotin carboxylase (AccC) and two subunits each of ACCase subunit alpha (AccA) and ACCase subunit beta (AccD).

It localises to the cytoplasm. The enzyme catalyses N(6)-carboxybiotinyl-L-lysyl-[protein] + acetyl-CoA = N(6)-biotinyl-L-lysyl-[protein] + malonyl-CoA. The protein operates within lipid metabolism; malonyl-CoA biosynthesis; malonyl-CoA from acetyl-CoA: step 1/1. Its function is as follows. Component of the acetyl coenzyme A carboxylase (ACC) complex. First, biotin carboxylase catalyzes the carboxylation of biotin on its carrier protein (BCCP) and then the CO(2) group is transferred by the carboxyltransferase to acetyl-CoA to form malonyl-CoA. The protein is Acetyl-coenzyme A carboxylase carboxyl transferase subunit alpha of Helicobacter pylori (strain P12).